Consider the following 284-residue polypeptide: uncharacterized protein (284 aa).

3 helical membrane passes run 174-194, 217-237, and 241-261; these read LFVL…YISI, MLIP…PGTA, and LIVL…SGSC.

It localises to the membrane. This is an uncharacterized protein from Saccharomyces cerevisiae (strain ATCC 204508 / S288c) (Baker's yeast).